A 399-amino-acid chain; its full sequence is Acetate kinase (399 aa).

Asn-7 is a binding site for Mg(2+). ATP is bound at residue Lys-14. Arg-89 is a substrate binding site. Residue Asp-146 is the Proton donor/acceptor of the active site. Residues 206–210 (HLGNG), 280–282 (DMR), and 328–332 (GIGEN) each bind ATP. A Mg(2+)-binding site is contributed by Glu-382.

It belongs to the acetokinase family. In terms of assembly, homodimer. Mg(2+) serves as cofactor. Mn(2+) is required as a cofactor.

It localises to the cytoplasm. It catalyses the reaction acetate + ATP = acetyl phosphate + ADP. It participates in metabolic intermediate biosynthesis; acetyl-CoA biosynthesis; acetyl-CoA from acetate: step 1/2. Catalyzes the formation of acetyl phosphate from acetate and ATP. Can also catalyze the reverse reaction. The protein is Acetate kinase of Campylobacter fetus subsp. fetus (strain 82-40).